The chain runs to 267 residues: MRLALRIAYDGTAFYGFQRQPGLRTVEGEIIRALTKLGIIEDVESSNFKGASRTDRGVSAFFNVVAFDVASRPDLVRPEVLNFHLKDVWVLGTAEVPEDFHPRFWAKSKTYRYYLIDAGFDEKAMRECAKLFIGTHDFSAFARLEPHKNPVRELIRADIIKRQGYYIIELEGKSFLWEMARRIVNALRFCGLGILTEEEVEKMLNGEYSRKIPPARPEGLVLWGIEYEGIEFRGNEKGIRKAKHDLFERYSEALTRAALFGDLLLGL.

Asp-55 (nucleophile) is an active-site residue. Residue Tyr-111 coordinates substrate.

This sequence belongs to the tRNA pseudouridine synthase TruA family.

It catalyses the reaction uridine(38/39/40) in tRNA = pseudouridine(38/39/40) in tRNA. Its function is as follows. Formation of pseudouridine at positions 38, 39 and 40 in the anticodon stem and loop of transfer RNAs. In Thermococcus onnurineus (strain NA1), this protein is tRNA pseudouridine synthase A.